We begin with the raw amino-acid sequence, 256 residues long: ATP synthase peripheral stalk subunit b, mitochondrial (256 aa).

The N-terminal 42 residues, 1-42, are a transit peptide targeting the mitochondrion; that stretch reads MLSRVVLSAAAAAAPSLKNAALLGPGVLQATRIFHTGQPSLA. K131 carries the N6-succinyllysine modification. N6-acetyllysine occurs at positions 139, 154, 162, 221, 233, and 244.

This sequence belongs to the eukaryotic ATPase B chain family. Component of the ATP synthase complex composed at least of ATP5F1A/subunit alpha, ATP5F1B/subunit beta, ATP5MC1/subunit c (homooctomer), MT-ATP6/subunit a, MT-ATP8/subunit 8, ATP5ME/subunit e, ATP5MF/subunit f, ATP5MG/subunit g, ATP5MK/subunit k, ATP5MJ/subunit j, ATP5F1C/subunit gamma, ATP5F1D/subunit delta, ATP5F1E/subunit epsilon, ATP5PF/subunit F6, ATP5PB/subunit b, ATP5PD/subunit d, ATP5PO/subunit OSCP. ATP synthase complex consists of a soluble F(1) head domain (subunits alpha(3) and beta(3)) - the catalytic core - and a membrane F(0) domain - the membrane proton channel (subunits c, a, 8, e, f, g, k and j). These two domains are linked by a central stalk (subunits gamma, delta, and epsilon) rotating inside the F1 region and a stationary peripheral stalk (subunits F6, b, d, and OSCP).

Its subcellular location is the mitochondrion. The protein localises to the mitochondrion inner membrane. Its function is as follows. Subunit b, of the mitochondrial membrane ATP synthase complex (F(1)F(0) ATP synthase or Complex V) that produces ATP from ADP in the presence of a proton gradient across the membrane which is generated by electron transport complexes of the respiratory chain. ATP synthase complex consist of a soluble F(1) head domain - the catalytic core - and a membrane F(1) domain - the membrane proton channel. These two domains are linked by a central stalk rotating inside the F(1) region and a stationary peripheral stalk. During catalysis, ATP synthesis in the catalytic domain of F(1) is coupled via a rotary mechanism of the central stalk subunits to proton translocation. In vivo, can only synthesize ATP although its ATP hydrolase activity can be activated artificially in vitro. Part of the complex F(0) domain. Part of the complex F(0) domain and the peripheric stalk, which acts as a stator to hold the catalytic alpha(3)beta(3) subcomplex and subunit a/ATP6 static relative to the rotary elements. This is ATP synthase peripheral stalk subunit b, mitochondrial from Bos taurus (Bovine).